The following is a 537-amino-acid chain: Light-independent protochlorophyllide reductase subunit B (537 aa).

D36 is a binding site for [4Fe-4S] cluster. D292 (proton donor) is an active-site residue. 428–429 (GL) is a substrate binding site. The interval 459–483 (TAGETAGQATEAATAPATPGAPLTG) is disordered.

Belongs to the ChlB/BchB/BchZ family. As to quaternary structure, protochlorophyllide reductase is composed of three subunits; BchL, BchN and BchB. Forms a heterotetramer of two BchB and two BchN subunits. Requires [4Fe-4S] cluster as cofactor.

It catalyses the reaction chlorophyllide a + oxidized 2[4Fe-4S]-[ferredoxin] + 2 ADP + 2 phosphate = protochlorophyllide a + reduced 2[4Fe-4S]-[ferredoxin] + 2 ATP + 2 H2O. Its pathway is porphyrin-containing compound metabolism; bacteriochlorophyll biosynthesis (light-independent). In terms of biological role, component of the dark-operative protochlorophyllide reductase (DPOR) that uses Mg-ATP and reduced ferredoxin to reduce ring D of protochlorophyllide (Pchlide) to form chlorophyllide a (Chlide). This reaction is light-independent. The NB-protein (BchN-BchB) is the catalytic component of the complex. In Chloroherpeton thalassium (strain ATCC 35110 / GB-78), this protein is Light-independent protochlorophyllide reductase subunit B.